The sequence spans 834 residues: uncharacterized protein (834 aa).

Disordered regions lie at residues 1 to 38, 166 to 280, and 767 to 787; these read MGSL…KAQP, DLSS…TPQE, and ISRV…NFHP. Low complexity-rich tracts occupy residues 7 to 18 and 166 to 252; these read SSKNNSSLGSIS and DLSS…SSSS.

It belongs to the IIV-6 268L family.

This is an uncharacterized protein from Invertebrate iridescent virus 3 (IIV-3).